The sequence spans 87 residues: DNA-directed RNA polymerase subunit omega (87 aa).

It belongs to the RNA polymerase subunit omega family. The RNAP catalytic core consists of 2 alpha, 1 beta, 1 beta' and 1 omega subunit. When a sigma factor is associated with the core the holoenzyme is formed, which can initiate transcription.

The catalysed reaction is RNA(n) + a ribonucleoside 5'-triphosphate = RNA(n+1) + diphosphate. Its function is as follows. Promotes RNA polymerase assembly. Latches the N- and C-terminal regions of the beta' subunit thereby facilitating its interaction with the beta and alpha subunits. In Acidothermus cellulolyticus (strain ATCC 43068 / DSM 8971 / 11B), this protein is DNA-directed RNA polymerase subunit omega.